Consider the following 98-residue polypeptide: uncharacterized protein (98 aa).

Residues 1–85 (MLETVPVRCV…GTLKQALENM (85 aa)) enclose the STAS domain.

Post-translationally, phosphorylated on threonine residue(s). Phosphorylated by PrkC and dephosphorylated by PrpC.

The protein localises to the cytoplasm. This is an uncharacterized protein from Bacillus subtilis (strain 168).